Reading from the N-terminus, the 156-residue chain is Endogenous retrovirus group K member 113 Pro protein (156 aa).

Residues 21–96 enclose the Peptidase A2 domain; it reads FEGLVDTGAD…IPLNLWGRDL (76 aa). Residue D26 is part of the active site. The region spanning 111–156 is the G-patch domain; that stretch reads YSPTSQKIMTKMGYIPGKGLGKNEDGIKIPVEAKINQKREGIGYPF.

Belongs to the peptidase A2 family. HERV class-II K(HML-2) subfamily. In terms of assembly, active as a homodimer. In terms of processing, autoproteolytically processed at the N-terminus. Expected C-terminal autoprocessing not detected. The sequence shown is that of the processed Pro protein.

The catalysed reaction is Processing at the authentic HIV-1 PR recognition site and release of the mature p17 matrix and the p24 capsid protein, as a result of the cleavage of the -SQNY-|-PIVQ- cleavage site.. In terms of biological role, retroviral proteases have roles in the processing of the primary translation products and the maturation of the viral particle. Endogenous Pro proteins may have kept, lost or modified their original function during evolution. In Homo sapiens (Human), this protein is Endogenous retrovirus group K member 113 Pro protein (HERVK_113).